The chain runs to 663 residues: Polyunsaturated fatty acid lipoxygenase ALOX15 (663 aa).

A PLAT domain is found at 2–115 (GVYRVCVSTG…VQSLPVGTGC (114 aa)). The region spanning 116-663 (TTVGDPQGLF…PSIVENSVAI (548 aa)) is the Lipoxygenase domain. His361, His366, His541, His545, and Ile663 together coordinate Fe cation.

Belongs to the lipoxygenase family. Interacts with PEBP1; in response to IL13/interleukin-13, prevents the interaction of PEBP1 with RAF1 to activate the ERK signaling cascade. It depends on Fe cation as a cofactor. Detected in reticulocytes (at protein level).

The protein localises to the cytoplasm. The protein resides in the cytosol. It localises to the cell membrane. It is found in the lipid droplet. It carries out the reaction (5Z,8Z,11Z,14Z)-eicosatetraenoate + O2 = (12S)-hydroperoxy-(5Z,8Z,10E,14Z)-eicosatetraenoate. The enzyme catalyses (5Z,8Z,11Z,14Z)-eicosatetraenoate + O2 = (15S)-hydroperoxy-(5Z,8Z,11Z,13E)-eicosatetraenoate. The catalysed reaction is (9Z,12Z)-octadecadienoate + O2 = (13S)-hydroperoxy-(9Z,11E)-octadecadienoate. It catalyses the reaction (5Z,8Z,11Z,14Z)-eicosatetraenoate + 2 O2 = (14R,15S)-dihydroperoxy-(5Z,8Z,10E,12E)-eicosatetraenoate. It carries out the reaction (5Z,8Z,11Z,14Z)-eicosatetraenoate + 2 O2 = (8S,15S)-dihydroperoxy-(5Z,9E,11Z,13E)-eicosatetraenoate. The enzyme catalyses (14S,15R)-epoxy-(5Z,8Z,11Z)-eicosatrienoate + O2 = (8S)-hydroperoxy-(14S,15R)-epoxy-(5Z,9E,11Z)-eicosatrienoate. The catalysed reaction is (14S,15R)-epoxy-(5Z,8Z,11Z)-eicosatrienoate + O2 = (12S)-hydroperoxy-(14S,15R)-epoxy-(5Z,8Z,10E)-eicosatrienoate. It catalyses the reaction (14R,15S)-epoxy-(5Z,8Z,11Z)-eicosatrienoate + O2 = (5S)-hydroperoxy-(14R,15S)-epoxy-(6E,8Z,11Z)-eicosatrienoate. It carries out the reaction (14R,15S)-epoxy-(5Z,8Z,11Z)-eicosatrienoate + O2 = (12S)-hydroperoxy-(14R,15S)-epoxy-(5Z,8Z,10E)-eicosatrienoate. The enzyme catalyses (15R)-hydroperoxy-(5Z,8Z,11Z,13E)-eicosatetraenoate = 15-oxo-(5Z,8Z,11Z,13E)-eicosatetraenoate + H2O. The catalysed reaction is (15S)-hydroperoxy-(5Z,8Z,11Z,13E)-eicosatetraenoate = (14S,15S)-epoxy-(5Z,8Z,10E,12E)-eicosatetraenoate + H2O. It catalyses the reaction (12S)-hydroperoxy-(5Z,8Z,10E,14Z)-eicosatetraenoate = (8S)-hydroxy-(11S,12S)-epoxy-(5Z,9E,14Z)-eicosatrienoate. It carries out the reaction (4Z,7Z,10Z,13Z,16Z)-docosapentaenoate + O2 = 14-hydroperoxy-(4Z,7Z,10Z,12E,16Z)-docosapentaenoate. The enzyme catalyses (7Z,10Z,13Z,16Z,19Z)-docosapentaenoate + O2 = 14-hydroperoxy-(7Z,10Z,12E,16Z,19Z)-docosapentaenoate. The catalysed reaction is (4Z,7Z,10Z,13Z,16Z,19Z)-docosahexaenoate + O2 = (14S)-hydroperoxy-(4Z,7Z,10Z,12E,16Z,19Z)-docosahexaenoate. It catalyses the reaction (4Z,7Z,10Z,13Z,16Z,19Z)-docosahexaenoate + O2 = (17S)-hydroperoxy-(4Z,7Z,10Z,13Z,15E,19Z)-docosahexaenoate. It carries out the reaction (7S)-hydroperoxy-(4Z,8E,10Z,13Z,16Z,19Z)-docosahexaenoate + O2 = (7S,14S)-dihydroperoxy-(4Z,8E,10Z,12E,16Z,19Z)-docosahexaenoate. The enzyme catalyses (7S)-hydroperoxy-(4Z,8E,10Z,13Z,16Z,19Z)-docosahexaenoate + O2 = (7S,17S)-dihydroperoxy-(4Z,8E,10Z,13Z,15E,19Z)-docosahexaenoate. The catalysed reaction is (4Z,7Z,10Z,13Z,16Z,19Z)-docosahexaenoate + O2 = (11S)-hydroperoxy-(4Z,7Z,9E,13Z,16Z,19Z)-docosahexaenoate. It catalyses the reaction N-(5Z,8Z,11Z,14Z)-eicosatetraenoyl-taurine + O2 = N-(15S)-hydroperoxy-(5Z,8Z,11Z,13E)-eicosatetraenoyl-taurine. It carries out the reaction N-(5Z,8Z,11Z,14Z)-eicosatetraenoyl-gamma-aminobutanoate + O2 = N-(15S)-hydroperoxy-(5Z,8Z,11Z,13E)-eicosatetraenoyl-gamma-aminobutanoate. The enzyme catalyses N-(5Z,8Z,11Z,14Z)-eicosatetraenoyl-glycine + O2 = N-(15S)-hydroperoxy-(5Z,8Z,11Z,13E)-eicosatetraenoyl-glycine. The catalysed reaction is N-(5Z,8Z,11Z,14Z)-eicosatetraenoyl-L-alanine + O2 = N-(15S)-hydroperoxy-(5Z,8Z,11Z,13E)-eicosatetraenoyl-alanine. It catalyses the reaction N-(5Z,8Z,11Z,14Z)-eicosatetraenoyl-taurine + O2 = N-(12S)-hydroperoxy-(5Z,8Z,10E,14Z)-eicosatetraenoyl-taurine. It carries out the reaction N-(5Z,8Z,11Z,14Z)-eicosatetraenoyl-gamma-aminobutanoate + O2 = N-(12S)-hydroperoxy-(5Z,8Z,10E,14Z)-eicosatetraenoyl-gamma-aminobutanoate. The enzyme catalyses N-(5Z,8Z,11Z,14Z)-eicosatetraenoyl-glycine + O2 = N-(12S)-hydroperoxy-(5Z,8Z,10E,14Z)-eicosatetraenoyl-glycine. The catalysed reaction is N-(5Z,8Z,11Z,14Z)-eicosatetraenoyl-L-alanine + O2 = N-(12S)-hydroperoxy-(5Z,8Z,10E,14Z)-eicosatetraenoyl-alanine. Its pathway is lipid metabolism; hydroperoxy eicosatetraenoic acid biosynthesis. Non-heme iron-containing dioxygenase that catalyzes the stereo-specific peroxidation of free and esterified polyunsaturated fatty acids generating a spectrum of bioactive lipid mediators. It inserts peroxyl groups at C12 or C15 of arachidonate ((5Z,8Z,11Z,14Z)-eicosatetraenoate) producing both 12-hydroperoxyeicosatetraenoate/12-HPETE and 15-hydroperoxyeicosatetraenoate/15-HPETE. It may then act on 12-HPETE to produce hepoxilins, which may show pro-inflammatory properties. Can also peroxidize linoleate ((9Z,12Z)-octadecadienoate) to 13-hydroperoxyoctadecadienoate. May participate in the sequential oxidations of DHA ((4Z,7Z,10Z,13Z,16Z,19Z)-docosahexaenoate) to generate specialized pro-resolving mediators (SPMs)like resolvin D5 ((7S,17S)-diHPDHA) and (7S,14S)-diHPDHA, that actively down-regulate the immune response and have anti-aggregation properties with platelets. Can convert epoxy fatty acids to hydroperoxy-epoxides derivatives followed by an intramolecular nucleophilic substitution leading to the formation of monocyclic endoperoxides. Plays an important role during the maintenance of self-tolerance by peroxidizing membrane-bound phosphatidylethanolamine which can then signal the sorting process for clearance of apoptotic cells during inflammation and prevent an autoimmune response. In addition to its role in the immune and inflammatory responses, this enzyme may play a role in epithelial wound healing in the cornea through production of lipoxin A4 (LXA(4)) and docosahexaenoic acid-derived neuroprotectin D1 (NPD1; 10R,17S-HDHA), both lipid autacoids exhibit anti-inflammatory and neuroprotective properties. Furthermore, it may regulate actin polymerization which is crucial for several biological processes such as the phagocytosis of apoptotic cells. It is also implicated in the generation of endogenous ligands for peroxisome proliferator activated receptor (PPAR-gamma), hence modulating macrophage development and function. It may also exert a negative effect on skeletal development by regulating bone mass through this pathway. As well as participates in ER stress and downstream inflammation in adipocytes, pancreatic islets, and liver. Finally, it is also involved in the cellular response to IL13/interleukin-13. The polypeptide is Polyunsaturated fatty acid lipoxygenase ALOX15 (Oryctolagus cuniculus (Rabbit)).